The primary structure comprises 116 residues: Mercuric transport protein MerT (116 aa).

The next 2 helical transmembrane spans lie at 16–36 (LAAILASACCLGPLVLIALGF) and 46–66 (VLEPYRPIFIGAALVALFFAW). Residues Cys-24 and Cys-25 each coordinate Hg(2+). Hg(2+)-binding residues include Cys-76 and Cys-82. Residues 94–114 (IFWFVAVLVLVALGFPYVMPF) traverse the membrane as a helical segment.

Belongs to the MerT family.

It localises to the cell inner membrane. In terms of biological role, involved in mercury resistance. Probably transfers a mercuric ion from the periplasmic Hg(2+)-binding protein MerP to the cytoplasmic mercuric reductase MerA. The sequence is that of Mercuric transport protein MerT from Acinetobacter calcoaceticus.